The primary structure comprises 64 residues: U-poneritoxin(01)-Om1a (64 aa).

The first 27 residues, 1–27 (MKPSGLTFAFLVVFMMAIMYNSVQVTA), serve as a signal peptide directing secretion. A propeptide spanning residues 28–45 (DADADAEAEALANALAEA) is cleaved from the precursor. At M62 the chain carries Methionine amide.

Truncated sequences of this peptide have also been found in the venom. It is possible they have been cleaved in the venom. Expressed by the venom gland.

Its subcellular location is the secreted. Its function is as follows. Antimicrobial peptide with activities against E.coli (MIC=1.3 uM), S.aureus (MIC=3.1 uM), and S.cerevisiae (MIC=50 uM). Also shows histamine-releasing activity (32.9% at 10 uM). Does not show hemolytic activity, even at 50 uM. It is a short peptide for which no alpha-helical region has been predicted. The sequence is that of U-poneritoxin(01)-Om1a from Odontomachus monticola (Trap-jaw ant).